A 103-amino-acid chain; its full sequence is uncharacterized protein (103 aa).

A helical membrane pass occupies residues 38 to 58; it reads FTTLITIYVAAFYTGVIGAAV.

The protein localises to the membrane. This is an uncharacterized protein from Arabidopsis thaliana (Mouse-ear cress).